We begin with the raw amino-acid sequence, 470 residues long: MASATKTLITELTPLDHLMPRTYVIGMNYIWPISRRSNIEDIHKHLKRGLEQTIKEIPFLGGSVVPTGSPGKFCIETLPGDFEGNQLIFNDLRTGSGNSWPNSYKNVRKARFPSTLFTDDCLSPVKGYMTRERLPVIAAQANFIDGGLILHLSVLHTACDVLAWNNILSILSKNVKASWPTEAEVSLNDDLQDYKVLPSFLDRSPLMRGNLNVERMDVREYKLQLANSKLEDPRNHLINPPPKSITEMENALFCISNSKLGELRDSISAEGSATSWLTVNDALAALMWCCVNRARISNGSQKLLRGNLSVAYDGRTVLDPPLPKRFMGNSALGFPITLDIHPKSVFEAALAISESRNDFNDKHIRDIIGFLDGLGDITQERVSYAKTLNPILVISNLKDMGFYEQDWGGSLGFPDALRMANPFLDYIPRVVPMPAQRNGNVYLIVWIEKSAAKRLREDETWNKWITPVFE.

The Proton acceptor role is filled by histidine 156.

This sequence belongs to the plant acyltransferase family.

The protein operates within polyketide biosynthesis. Functionally, acyltransferase; part of the gene cluster B that mediates the biosynthesis of botcinic acid and its botcinin derivatives, acetate-derived polyketides that contribute to virulence when combined with the sesquiterpene botrydial. Botcinic acid and its derivatives have been shown to induce chlorosis and necrosis during host plant infection, but also have antifungal activities. Two polyketide synthases, BOA6 and BOA9, are involved in the biosynthesis of botcinins. BOA6 mediates the formation of the per-methylated tetraketide core by condensation of four units of malonyl-CoA with one unit of acetyl-CoA, which would be methylated in activated methylene groups to yield a bicyclic acid intermediate that could then either be converted to botrylactone derivatives or lose the starter acetate unit through a retro-Claisen type C-C bond cleavage to yield botcinin derivatives. The second polyketide synthase, BOA9, is probably required for the biosynthesis of the tetraketide side chain of botcinins. The methyltransferase (MT) domain within BOA6 is probably responsible for the incorporation of four methyl groups. The trans-enoyl reductase BOA5 might take over the enoyl reductase function of BOA6 that misses an ER domain. The monooxygenases BOA2, BOA3 and BOA4 might be involved in further hydroxylations at C4, C5 and C8, whereas BOA7, close to BOA9, could potentially be involved in the hydroxylation at C4 in the side chain of botcinins. In Botryotinia fuckeliana (strain B05.10) (Noble rot fungus), this protein is Acyltransferase BOA11.